A 249-amino-acid polypeptide reads, in one-letter code: Probable septum site-determining protein MinC (249 aa).

The interval 115–144 is disordered; it reads PTAVSPPPPPPPPPARAEPAPPAARPAPGR. A compositionally biased stretch (pro residues) spans 118 to 139; it reads VSPPPPPPPPPARAEPAPPAAR.

The protein belongs to the MinC family. As to quaternary structure, interacts with MinD and FtsZ.

In terms of biological role, cell division inhibitor that blocks the formation of polar Z ring septums. Rapidly oscillates between the poles of the cell to destabilize FtsZ filaments that have formed before they mature into polar Z rings. Prevents FtsZ polymerization. This chain is Probable septum site-determining protein MinC, found in Xanthomonas axonopodis pv. citri (strain 306).